The sequence spans 332 residues: GDP-mannose transporter 2 (332 aa).

Residues 1 to 12 (MSSLKVSQQDKK) lie on the Cytoplasmic side of the membrane. Residues 13-33 (WVNSGSVAILAYCASSILMTI) form a helical membrane-spanning segment. Over 34-47 (TNKVVMSDRTFNMN) the chain is Lumenal. The helical transmembrane segment at 48 to 68 (FLLLFIQSLVCVITLLVLKVL) threads the bilayer. Residues 69 to 84 (GSVNFRSFNKTDARNW) lie on the Cytoplasmic side of the membrane. Residues 85–105 (FPISICLVLMIFTSSKSLQYL) traverse the membrane as a helical segment. Residues 106–108 (SVP) are Lumenal-facing. A helical transmembrane segment spans residues 109–129 (VYTIFKNLTIIVIAYGEVLFF). Residues 130–131 (GS) are Cytoplasmic-facing. Residues 132–152 (SVGNMELGSFALMIVSSLIAA) form a helical membrane-spanning segment. Over 153 to 174 (HGDYLHSVERLKKMLGPNVSFS) the chain is Lumenal. N170 carries N-linked (GlcNAc...) asparagine glycosylation. The chain crosses the membrane as a helical span at residues 175–195 (FIVNIGYFWIAANCFASALFV). Residues 196-211 (LLMRKRIQVTNFKDFD) are Cytoplasmic-facing. A helical transmembrane segment spans residues 212 to 232 (TMFYNNVLSLPLLLLGSYLFE). Residues 233 to 248 (DWSQENLLPHVDIDNL) lie on the Lumenal side of the membrane. The N-linked (GlcNAc...) asparagine glycan is linked to N247. The helical transmembrane segment at 249–269 (STMIISGLASVAISYCSGWCV) threads the bilayer. At 270–274 (RVTSS) the chain is on the cytoplasmic side. Residues 275–295 (TTYSMVGALNKLPIALTGFLF) traverse the membrane as a helical segment. At 296-300 (NDAAR) the chain is on the lumenal side. Residues 301 to 321 (NLSSAASILLGFASGIIYAVA) form a helical membrane-spanning segment. At 322–332 (KQKKLQNSEKI) the chain is on the cytoplasmic side.

It belongs to the TPT transporter family. SLC35D subfamily. As to quaternary structure, homooligomer.

It is found in the golgi apparatus membrane. Its subcellular location is the cytoplasmic vesicle membrane. The protein resides in the endoplasmic reticulum membrane. Involved in the import of GDP-mannose from the cytoplasm into the Golgi lumen. This chain is GDP-mannose transporter 2 (VRG4-2), found in Vanderwaltozyma polyspora (strain ATCC 22028 / DSM 70294 / BCRC 21397 / CBS 2163 / NBRC 10782 / NRRL Y-8283 / UCD 57-17) (Kluyveromyces polysporus).